The following is a 322-amino-acid chain: Tetraacyldisaccharide 4'-kinase (322 aa).

Residue 54 to 61 participates in ATP binding; that stretch reads SVGGTGKT.

Belongs to the LpxK family.

It carries out the reaction a lipid A disaccharide + ATP = a lipid IVA + ADP + H(+). It functions in the pathway glycolipid biosynthesis; lipid IV(A) biosynthesis; lipid IV(A) from (3R)-3-hydroxytetradecanoyl-[acyl-carrier-protein] and UDP-N-acetyl-alpha-D-glucosamine: step 6/6. Its function is as follows. Transfers the gamma-phosphate of ATP to the 4'-position of a tetraacyldisaccharide 1-phosphate intermediate (termed DS-1-P) to form tetraacyldisaccharide 1,4'-bis-phosphate (lipid IVA). This chain is Tetraacyldisaccharide 4'-kinase (lpxK), found in Francisella novicida.